A 954-amino-acid polypeptide reads, in one-letter code: Glycine dehydrogenase (decarboxylating) (954 aa).

Lys-699 carries the post-translational modification N6-(pyridoxal phosphate)lysine.

The protein belongs to the GcvP family. In terms of assembly, the glycine cleavage system is composed of four proteins: P, T, L and H. The cofactor is pyridoxal 5'-phosphate.

It catalyses the reaction N(6)-[(R)-lipoyl]-L-lysyl-[glycine-cleavage complex H protein] + glycine + H(+) = N(6)-[(R)-S(8)-aminomethyldihydrolipoyl]-L-lysyl-[glycine-cleavage complex H protein] + CO2. In terms of biological role, the glycine cleavage system catalyzes the degradation of glycine. The P protein binds the alpha-amino group of glycine through its pyridoxal phosphate cofactor; CO(2) is released and the remaining methylamine moiety is then transferred to the lipoamide cofactor of the H protein. The polypeptide is Glycine dehydrogenase (decarboxylating) (Nitrobacter winogradskyi (strain ATCC 25391 / DSM 10237 / CIP 104748 / NCIMB 11846 / Nb-255)).